A 91-amino-acid polypeptide reads, in one-letter code: Small ribosomal subunit protein bS16 (91 aa).

Belongs to the bacterial ribosomal protein bS16 family.

This chain is Small ribosomal subunit protein bS16, found in Phytoplasma australiense.